Consider the following 1409-residue polypeptide: DNA-directed RNA polymerase subunit beta' (1409 aa).

Zn(2+) is bound by residues Cys-70, Cys-72, Cys-85, and Cys-88. Mg(2+) contacts are provided by Asp-458, Asp-460, and Asp-462. Residues Cys-813, Cys-887, Cys-894, and Cys-897 each contribute to the Zn(2+) site. Over residues 1385 to 1403 the composition is skewed to low complexity; it reads EAAELAGSTSDVSTTADAS. The disordered stretch occupies residues 1385 to 1409; it reads EAAELAGSTSDVSTTADASEGAASE.

The protein belongs to the RNA polymerase beta' chain family. The RNAP catalytic core consists of 2 alpha, 1 beta, 1 beta' and 1 omega subunit. When a sigma factor is associated with the core the holoenzyme is formed, which can initiate transcription. Mg(2+) serves as cofactor. Zn(2+) is required as a cofactor.

The enzyme catalyses RNA(n) + a ribonucleoside 5'-triphosphate = RNA(n+1) + diphosphate. In terms of biological role, DNA-dependent RNA polymerase catalyzes the transcription of DNA into RNA using the four ribonucleoside triphosphates as substrates. This is DNA-directed RNA polymerase subunit beta' from Variovorax paradoxus (strain S110).